A 186-amino-acid polypeptide reads, in one-letter code: Archaemetzincin (186 aa).

His136 serves as a coordination point for Zn(2+). The active-site Proton acceptor is the Glu137. 6 residues coordinate Zn(2+): His140, His146, Cys147, Cys152, Cys171, and Cys174.

This sequence belongs to the peptidase M54 family. In terms of assembly, monomer. It depends on Zn(2+) as a cofactor.

Its function is as follows. Probable zinc metalloprotease whose natural substrate is unknown. The polypeptide is Archaemetzincin (Thermococcus kodakarensis (strain ATCC BAA-918 / JCM 12380 / KOD1) (Pyrococcus kodakaraensis (strain KOD1))).